A 499-amino-acid chain; its full sequence is Centrosomal protein of 57 kDa (499 aa).

Positions 1–35 (MAAASVSETSASQFSNILAEPSKSNGSMVRHSSSP) are enriched in polar residues. Residues 1 to 58 (MAAASVSETSASQFSNILAEPSKSNGSMVRHSSSPYVVYPPDKPFLNSDLRRSPNKPT) form a disordered region. Ser53 bears the Phosphoserine mark. Residues 58–239 (TFAYPESNSR…KAAQLQTGLE (182 aa)) form a centrosome localization domain (CLD) region. Residues 63-241 (ESNSRAIFSA…AQLQTGLEVN (179 aa)) are a coiled coil. The tract at residues 277-490 (AVQPHYRLCL…KDMQSIQNSL (214 aa)) is mediates interaction with microtubules. 2 disordered regions span residues 334-357 (KQVS…SVNE) and 431-476 (KQKK…SRKN). Low complexity predominate over residues 346 to 357 (SATPPSSSSVNE). Residues 389–450 (TVELKDNLEC…KTLDEEGNSS (62 aa)) are a coiled coil. Basic and acidic residues predominate over residues 431-444 (KQKKELKATRKTLD). Residues 449–459 (SSSRSTTTGTT) are compositionally biased toward low complexity. Basic and acidic residues predominate over residues 460 to 474 (NKKDFAKPRPGEKSR).

Belongs to the translokin family. In terms of assembly, homodimer and homooligomer. Interacts with FGF2 and RAP80. Does not interact with FGF1 or FGF2 isoform 24 kDa. Interacts with microtubules.

It is found in the nucleus. Its subcellular location is the cytoplasm. The protein localises to the cytoskeleton. It localises to the microtubule organizing center. The protein resides in the centrosome. Centrosomal protein which may be required for microtubule attachment to centrosomes. May act by forming ring-like structures around microtubules. Mediates nuclear translocation and mitogenic activity of the internalized growth factor FGF2. This chain is Centrosomal protein of 57 kDa (CEP57), found in Bos taurus (Bovine).